Reading from the N-terminus, the 288-residue chain is Shikimate dehydrogenase (NADP(+)) (288 aa).

Shikimate is bound by residues 21 to 23 (SLS) and threonine 68. Lysine 72 functions as the Proton acceptor in the catalytic mechanism. Asparagine 93 and aspartate 108 together coordinate shikimate. Residues 132–136 (GNGGA) and leucine 230 contribute to the NADP(+) site. Tyrosine 232 lines the shikimate pocket. Residue glycine 253 coordinates NADP(+).

This sequence belongs to the shikimate dehydrogenase family. In terms of assembly, homodimer.

The catalysed reaction is shikimate + NADP(+) = 3-dehydroshikimate + NADPH + H(+). The protein operates within metabolic intermediate biosynthesis; chorismate biosynthesis; chorismate from D-erythrose 4-phosphate and phosphoenolpyruvate: step 4/7. In terms of biological role, involved in the biosynthesis of the chorismate, which leads to the biosynthesis of aromatic amino acids. Catalyzes the reversible NADPH linked reduction of 3-dehydroshikimate (DHSA) to yield shikimate (SA). This Crocosphaera subtropica (strain ATCC 51142 / BH68) (Cyanothece sp. (strain ATCC 51142)) protein is Shikimate dehydrogenase (NADP(+)).